Consider the following 139-residue polypeptide: Large-conductance mechanosensitive channel (139 aa).

The next 2 membrane-spanning stretches (helical) occupy residues 9–29 and 79–99; these read AFAV…GAAF and IQSV…VKAI.

Belongs to the MscL family. As to quaternary structure, homopentamer.

Its subcellular location is the cell inner membrane. Its function is as follows. Channel that opens in response to stretch forces in the membrane lipid bilayer. May participate in the regulation of osmotic pressure changes within the cell. The chain is Large-conductance mechanosensitive channel from Pseudomonas fluorescens (strain SBW25).